The primary structure comprises 763 residues: uncharacterized protein (763 aa).

One can recognise a TR mART core domain in the interval 380–607; sequence DSVLNPFNTN…YNIKVITMRL (228 aa). The helical transmembrane segment at 684–700 threads the bilayer; the sequence is SYVSIYALLCPLLTNIY.

The protein localises to the membrane. This is an uncharacterized protein from Acanthamoeba polyphaga mimivirus (APMV).